The chain runs to 220 residues: CASP-like protein 1E1 (220 aa).

The Cytoplasmic segment spans residues 1–57 (METPTPRVKPGFNGVGVGMGSSVNGSSRRAGYYMGPAGAVAVAGGGRAAAAAPVDGC). The chain crosses the membrane as a helical span at residues 58–78 (SVALRVFVLAATLVSAVVMGV). At 79–108 (DRQTSTIRITVTDALPPLEVPLTANWSYSS) the chain is on the extracellular side. Asn103 carries N-linked (GlcNAc...) asparagine glycosylation. The helical transmembrane segment at 109 to 129 (AFVYFVVANAMVCLFSAAALA) threads the bilayer. Residues 130 to 144 (ACRSRAAMVPVMVGD) lie on the Cytoplasmic side of the membrane. Residues 145–165 (LLALALLYSAVGAAAEFGILG) form a helical membrane-spanning segment. Topologically, residues 166 to 187 (ERGNSHVRWPKVCNVYGRFCER) are extracellular. A helical transmembrane segment spans residues 188–208 (AMAAVIVSLIAAFANLVLLML). Residues 209–220 (NILTIHKSSSYY) are Cytoplasmic-facing.

It belongs to the Casparian strip membrane proteins (CASP) family. As to quaternary structure, homodimer and heterodimers.

Its subcellular location is the cell membrane. This Zea mays (Maize) protein is CASP-like protein 1E1.